Reading from the N-terminus, the 121-residue chain is Large ribosomal subunit protein bL19 (121 aa).

It belongs to the bacterial ribosomal protein bL19 family.

In terms of biological role, this protein is located at the 30S-50S ribosomal subunit interface and may play a role in the structure and function of the aminoacyl-tRNA binding site. The polypeptide is Large ribosomal subunit protein bL19 (Neisseria meningitidis serogroup C (strain 053442)).